A 1218-amino-acid chain; its full sequence is MEESQSKQESNTRVAQHGSQQDVDPTFQTKRALEKERSKPRPRPLPRVQLQSLPGWSSTSNDVPLSQLIREMDHESRRCIHRSKKKLDRSEHISQGTIPEIYEKRKETISHTQSMEQKYLFQNFTKLLLLQKCCPGGSEKLVRESWHPCVPEEGGHMIEIQDLFDPNLDTEKKPQLVIIEGAAGIGKSTLARQVKRAWDEGQLYRDRFQHVFFFSCRELAQCKQLSLAELIAQGQEVPTAPTRQILSRPEKLLFILDGIDEPAWVLEDQNPELCVHWSQAQPVHTLLGSLLGKSILPEASLMLTARTTALQKLVPSLGQPHRVEVLGFSEFERKDYFYKYFAKERNTIIDFNLIGSIPVLLTLCEVPWVCWLLCTCLEKQMQQGEVLSLTSQTTTALCLKYLSLTIPGQHLSTQLRTLCSLAAEGICQRRTLFSKSDLCKQGLAEDAIATFLKIGVLQRQPSSLSYSFAHLCLQEFFAAMSYILEDSEEAHGDMGNDRTVETLVERYGRQNLFEAPTVRFLLGLLNTREMREMENIFACKFPWETKLKLLQSIIGEPFCQPCHLGLFHCLYENQEEELLTETMLCFPLTASGPNHMEATVFQTNVKRLVIQTDMELMVVTFCITFSHVRSLRLKGKGQQEYKLTAPAMVLYRWTPISEASWKVLFSNLKCTRNLEELDLSGNPLSYSAVRSLCTALRQPGCRLKTLWLVDCGLTSRCCSFLASMLSAHSRLAELDLRLNDLGDNGVRQLCEGLRNPACNLSILRLDQASLSEQVITELRALETKNPKLFISSTWMSHMTMPTENTDGEESLTSSKQQQQQSGDKHMEPLGTDDDFWGPSGPVSTEVVDRERNLYRVRLPMAGSYHCPSTGLHFVVTRAVTIEIGFCAWSQFLHETPLQHSHMVAGPLFDIKAEHGAVTAVCLPHFVSLQEGKVDSSLFHVAHFQDHGMVLETPARVEPHFAVLENPSFSPMGVLLRMIPAVGHFIPITSITLIYYRLYLEDITFHLYLVPNDCTIRKAIDEEELKFQFVRINKPPPVDALYVGSRYIVSSSKEVEILPKELELCYRSPRESQLFSEIYVGNIGSGINLQLTDKKYMNLIWEALLKPGDLRPALPRMASAPKDAPALLHFVDQHREQLVARVTSVDPLLDKLHGLVLSEEDYETVRAEATNQDKMRKLFRGSRSWSWDCKDHFYQALKETHPHLIMDLLEKSGGVSVRL.

Positions 1–61 (MEESQSKQES…SLPGWSSTSN (61 aa)) are disordered. The span at 7 to 29 (KQESNTRVAQHGSQQDVDPTFQT) shows a compositional bias: polar residues. The 310-residue stretch at 175 to 484 (QLVIIEGAAG…EFFAAMSYIL (310 aa)) folds into the NACHT domain. 181-188 (GAAGIGKS) contacts ATP. 3 LRR repeats span residues 343 to 364 (KERNTIIDFNLIGSIPVLLTLC), 673 to 693 (NLEELDLSGNPLSYSAVRSLC), and 730 to 750 (RLAELDLRLNDLGDNGVRQLC). Residues 799 to 815 (TMPTENTDGEESLTSSK) show a composition bias toward polar residues. The tract at residues 799–842 (TMPTENTDGEESLTSSKQQQQQSGDKHMEPLGTDDDFWGPSGPV) is disordered. The segment at 835-968 (FWGPSGPVST…HFAVLENPSF (134 aa)) is ZU5. The FIIND domain occupies 835–1118 (FWGPSGPVST…LRPALPRMAS (284 aa)). The tract at residues 969–1118 (SPMGVLLRMI…LRPALPRMAS (150 aa)) is UPA. Residues 1122 to 1211 (DAPALLHFVD…HLIMDLLEKS (90 aa)) form the CARD domain.

The protein belongs to the NLRP family. As to quaternary structure, interacts (via LRR repeats) with BCL2 and BCL2L1 (via the loop between motifs BH4 and BH3). Interacts with NOD2; this interaction is enhanced in the presence of muramyl dipeptide (MDP) and increases IL1B release. Interacts with EIF2AK2/PKR; this interaction requires EIF2AK2 activity, is accompanied by EIF2AK2 autophosphorylation and promotes inflammasome assembly in response to danger-associated signals. Interacts with MEFV; this interaction targets Nlrp1a to degradation by autophagy, hence preventing excessive IL1B- and IL18-mediated inflammation. Interacts with DPP9; leading to inhibit activation of the inflammasome. DPP9 acts via formation of a ternary complex, composed of a DPP9 homodimer, one full-length NLRP1 protein, and one cleaved C-terminus of Nlrp1a (NACHT, LRR and PYD domains-containing protein 1a, C-terminus). Interacts with DPP8; leading to inhibit activation of the inflammasome, probably via formation of a ternary complex with DPP8. In terms of assembly, interacts with the C-terminal part of Nlrp1a (NACHT, LRR and PYD domains-containing protein 1a, C-terminus) in absence of pathogens and other damage-associated signals. Interacts with the N-terminal part of Nlrp1a (NACHT, LRR and PYD domains-containing protein 1a, N-terminus) in absence of pathogens and other damage-associated signals. Homomultimer; forms the Nlrp1a inflammasome polymeric complex, a filament composed of homopolymers of this form in response to pathogens and other damage-associated signals. The Nlrp1a inflammasome polymeric complex directly recruits pro-caspase-1 (proCASP1) independently of PYCARD/ASC. Interacts (via CARD domain) with CASP1 (via CARD domain); leading to CASP1 activation. In terms of processing, autocatalytically cleaved. Autocatalytic cleavage in FIIND region occurs constitutively, prior to activation signals, and is required for inflammasome activity (IL1B release), possibly by facilitating CASP1 binding. Both N- and C-terminal parts remain associated non-covalently. Post-translationally, (Microbial infection) Cleavage by B.anthracis lethal toxin (LT) endopeptidase promotes ubiquitination and degradation of the N-terminal part, releasing the cleaved C-terminal part of the protein (NACHT, LRR and PYD domains-containing protein 1a, C-terminus), which polymerizes and forms the Nlrp1a inflammasome. Ubiquitinated in response to pathogen-associated signals, leading to its degradation by the proteasome and subsequent release of the cleaved C-terminal part of the protein (NACHT, LRR and PYD domains-containing protein 1a, C-terminus), which polymerizes and forms the Nlrp1a inflammasome.

The protein resides in the cytoplasm. The protein localises to the cytosol. Its subcellular location is the nucleus. It is found in the inflammasome. Activated by cleavage by B.anthracis lethal toxin (LT) endopeptidase. Cleavage by LT promotes ubiquitination and degradation of the N-terminal part, releasing the cleaved C-terminal part of the protein (NACHT, LRR and PYD domains-containing protein 1a, C-terminus), which polymerizes and forms the Nlrp1a inflammasome. Nlrp1a inflammasome is inhibited by DPP8 and DPP9, which sequester the C-terminal fragment of Nlrp1a (NACHT, LRR and PYD domains-containing protein 1a, C-terminus) in a ternary complex, thereby preventing Nlrp1a oligomerization and activation. Nlrp1a inflammasome is weakly activated by Val-boroPro (Talabostat, PT-100), an inhibitor of dipeptidyl peptidases DPP8 and DPP9. Val-boroPro relieves inhibition of DPP8 and/or DPP9 by promoting disruption of the ternary complex, releasing its C-terminal part from autoinhibition. Weakly activated by Toxoplasma gondii. Functionally, acts as the sensor component of the Nlrp1a inflammasome, which mediates inflammasome activation in response to various pathogen-associated signals, leading to subsequent pyroptosis. Inflammasomes are supramolecular complexes that assemble in the cytosol in response to pathogens and other damage-associated signals and play critical roles in innate immunity and inflammation. Acts as a recognition receptor (PRR): recognizes specific pathogens and other damage-associated signals, such as B.anthracis lethal toxin (LT) or Val-boroPro inhibitor, and mediates the formation of the inflammasome polymeric complex. In response to pathogen-associated signals, the N-terminal part of Nlrp1a is degraded by the proteasome, releasing the cleaved C-terminal part of the protein (NACHT, LRR and PYD domains-containing protein 1a, C-terminus), which polymerizes to initiate the formation of the inflammasome complex: the inflammasome directly recruits pro-caspase-1 (proCASP1) independently of PYCARD/ASC and promotes caspase-1 (CASP1) activation, which subsequently cleaves and activates inflammatory cytokines IL1B and IL18 and gasdermin-D (GSDMD), leading to pyroptosis. In the absence of GSDMD expression, the Nlrp1a inflammasome is able to recruit and activate CASP8, leading to activation of gasdermin-E (GSDME). Its function is as follows. Constitutes the precursor of the Nlrp1a inflammasome, which mediates autoproteolytic processing within the FIIND domain to generate the N-terminal and C-terminal parts, which are associated non-covalently in absence of pathogens and other damage-associated signals. In terms of biological role, regulatory part that prevents formation of the Nlrp1a inflammasome: in absence of pathogens and other damage-associated signals, interacts with the C-terminal part of Nlrp1a (NACHT, LRR and PYD domains-containing protein 1a, C-terminus), preventing activation of the Nlrp1a inflammasome. In response to pathogen-associated signals, this part is ubiquitinated by the N-end rule pathway and degraded by the proteasome, releasing the cleaved C-terminal part of the protein, which polymerizes and forms the Nlrp1a inflammasome. Constitutes the active part of the Nlrp1a inflammasome. In absence of pathogens and other damage-associated signals, interacts with the N-terminal part of Nlrp1a (NACHT, LRR and PYD domains-containing protein 1a, N-terminus), preventing activation of the Nlrp1a inflammasome. In response to pathogen-associated signals, the N-terminal part of Nlrp1a is degraded by the proteasome, releasing this form, which polymerizes to form the Nlrp1a inflammasome complex: the Nlrp1a inflammasome complex then directly recruits pro-caspase-1 (proCASP1) and promotes caspase-1 (CASP1) activation, leading to gasdermin-D (GSDMD) cleavage and subsequent pyroptosis. This Rattus norvegicus (Rat) protein is NACHT, LRR and PYD domains-containing protein 1a allele 1.